The following is a 260-amino-acid chain: RNA replication protein (260 aa).

Positions 40 to 147 constitute a RdRp catalytic domain; the sequence is GICTESDYEA…SERLCIKKEH (108 aa).

Belongs to the potexviruses/carlaviruses RNA replication protein family.

The enzyme catalyses RNA(n) + a ribonucleoside 5'-triphosphate = RNA(n+1) + diphosphate. It carries out the reaction ATP + H2O = ADP + phosphate + H(+). In terms of biological role, RNA replication. The central part of this protein possibly functions as an ATP-binding helicase. This Chrysanthemum morifolium (Florist's daisy) protein is RNA replication protein.